A 908-amino-acid polypeptide reads, in one-letter code: Probable disease resistance RPP8-like protein 4 (908 aa).

Residues 15–57 (DLLSRESERLQGIDEQLDGLKRQLRSLQSLLKDADAKKHGSDR) adopt a coiled-coil conformation. In terms of domain architecture, NB-ARC spans 146–459 (RQRVQREIRQ…AEGIYDGSTI (314 aa)). 192–199 (GMGGIGKT) provides a ligand contact to ATP. LRR repeat units follow at residues 575-599 (LTLL…SIGG), 600-623 (LIHL…MRNL), and 842-867 (MPCL…KYIT).

It belongs to the disease resistance NB-LRR family. RPP8/HRT subfamily.

Its function is as follows. Potential disease resistance protein. In Arabidopsis thaliana (Mouse-ear cress), this protein is Probable disease resistance RPP8-like protein 4 (RPP8L4).